The sequence spans 128 residues: Otoraplin (128 aa).

An N-terminal signal peptide occupies residues 1 to 18 (MARILILLLGGLVVLCAG). Intrachain disulfides connect cysteine 32-cysteine 37 and cysteine 55-cysteine 127. The SH3 domain maps to 39-110 (YTISLARAQE…PSNLVKEQRV (72 aa)).

This sequence belongs to the MIA/OTOR family. As to expression, highly expressed in cochlea.

It localises to the secreted. In Mus musculus (Mouse), this protein is Otoraplin (Otor).